The sequence spans 382 residues: Type 2 DNA topoisomerase 6 subunit A (382 aa).

The 142-residue stretch at tyrosine 14–tyrosine 155 folds into the Topo IIA-type catalytic domain. The active-site O-(5'-phospho-DNA)-tyrosine intermediate is the tyrosine 108. Residues glutamate 202 and aspartate 254 each contribute to the Mg(2+) site.

This sequence belongs to the TOP6A family. Homodimer. Heterotetramer of two Top6A and two Top6B chains. The cofactor is Mg(2+).

It catalyses the reaction ATP-dependent breakage, passage and rejoining of double-stranded DNA.. Functionally, relaxes both positive and negative superturns and exhibits a strong decatenase activity. In Pyrococcus horikoshii (strain ATCC 700860 / DSM 12428 / JCM 9974 / NBRC 100139 / OT-3), this protein is Type 2 DNA topoisomerase 6 subunit A.